The following is a 141-amino-acid chain: Large ribosomal subunit protein uL11 (141 aa).

Belongs to the universal ribosomal protein uL11 family. Part of the ribosomal stalk of the 50S ribosomal subunit. Interacts with L10 and the large rRNA to form the base of the stalk. L10 forms an elongated spine to which L12 dimers bind in a sequential fashion forming a multimeric L10(L12)X complex. One or more lysine residues are methylated.

Forms part of the ribosomal stalk which helps the ribosome interact with GTP-bound translation factors. In Synechococcus sp. (strain CC9311), this protein is Large ribosomal subunit protein uL11.